Reading from the N-terminus, the 264-residue chain is Thymidylate synthase (264 aa).

Arg21 is a binding site for dUMP. Position 51 (His51) interacts with (6R)-5,10-methylene-5,6,7,8-tetrahydrofolate. A dUMP-binding site is contributed by 126 to 127 (RR). Residue Cys146 is the Nucleophile of the active site. DUMP contacts are provided by residues 166–169 (RSAD), Asn177, and 207–209 (HLY). Asp169 provides a ligand contact to (6R)-5,10-methylene-5,6,7,8-tetrahydrofolate. Ser263 is a binding site for (6R)-5,10-methylene-5,6,7,8-tetrahydrofolate.

It belongs to the thymidylate synthase family. Bacterial-type ThyA subfamily. In terms of assembly, homodimer.

The protein resides in the cytoplasm. It catalyses the reaction dUMP + (6R)-5,10-methylene-5,6,7,8-tetrahydrofolate = 7,8-dihydrofolate + dTMP. It functions in the pathway pyrimidine metabolism; dTTP biosynthesis. Catalyzes the reductive methylation of 2'-deoxyuridine-5'-monophosphate (dUMP) to 2'-deoxythymidine-5'-monophosphate (dTMP) while utilizing 5,10-methylenetetrahydrofolate (mTHF) as the methyl donor and reductant in the reaction, yielding dihydrofolate (DHF) as a by-product. This enzymatic reaction provides an intracellular de novo source of dTMP, an essential precursor for DNA biosynthesis. The polypeptide is Thymidylate synthase (Neisseria meningitidis serogroup B (strain ATCC BAA-335 / MC58)).